The sequence spans 349 residues: Dihydroorotate dehydrogenase (quinone) (349 aa).

FMN is bound by residues 67-71 (AGLDK) and T91. K71 is a substrate binding site. 116-120 (NRLGF) serves as a coordination point for substrate. FMN contacts are provided by N147 and N180. N180 lines the substrate pocket. S183 serves as the catalytic Nucleophile. A substrate-binding site is contributed by N185. Residues K225 and T253 each coordinate FMN. Position 254 to 255 (254 to 255 (NT)) interacts with substrate. FMN-binding positions include G276, G305, and 326 to 327 (YT).

Belongs to the dihydroorotate dehydrogenase family. Type 2 subfamily. In terms of assembly, monomer. FMN is required as a cofactor.

Its subcellular location is the cell membrane. The enzyme catalyses (S)-dihydroorotate + a quinone = orotate + a quinol. The protein operates within pyrimidine metabolism; UMP biosynthesis via de novo pathway; orotate from (S)-dihydroorotate (quinone route): step 1/1. Its function is as follows. Catalyzes the conversion of dihydroorotate to orotate with quinone as electron acceptor. This Bordetella parapertussis (strain 12822 / ATCC BAA-587 / NCTC 13253) protein is Dihydroorotate dehydrogenase (quinone).